The following is a 156-amino-acid chain: 6,7-dimethyl-8-ribityllumazine synthase (156 aa).

5-amino-6-(D-ribitylamino)uracil contacts are provided by residues F22, 57–59 (AYE), and 81–83 (TVI). 86-87 (GT) is a binding site for (2S)-2-hydroxy-3-oxobutyl phosphate. Catalysis depends on H89, which acts as the Proton donor. F114 is a 5-amino-6-(D-ribitylamino)uracil binding site. (2S)-2-hydroxy-3-oxobutyl phosphate is bound at residue R128.

The protein belongs to the DMRL synthase family. Forms an icosahedral capsid composed of 60 subunits, arranged as a dodecamer of pentamers.

The catalysed reaction is (2S)-2-hydroxy-3-oxobutyl phosphate + 5-amino-6-(D-ribitylamino)uracil = 6,7-dimethyl-8-(1-D-ribityl)lumazine + phosphate + 2 H2O + H(+). The protein operates within cofactor biosynthesis; riboflavin biosynthesis; riboflavin from 2-hydroxy-3-oxobutyl phosphate and 5-amino-6-(D-ribitylamino)uracil: step 1/2. Catalyzes the formation of 6,7-dimethyl-8-ribityllumazine by condensation of 5-amino-6-(D-ribitylamino)uracil with 3,4-dihydroxy-2-butanone 4-phosphate. This is the penultimate step in the biosynthesis of riboflavin. This Erwinia tasmaniensis (strain DSM 17950 / CFBP 7177 / CIP 109463 / NCPPB 4357 / Et1/99) protein is 6,7-dimethyl-8-ribityllumazine synthase.